Consider the following 384-residue polypeptide: Cytochrome b (384 aa).

The next 4 membrane-spanning stretches (helical) occupy residues 32-52 (FGSLLGLCLAMQIVTGCFLSM), 75-96 (FLLRYFHANGASLFFLCLYFHI), 111-131 (WRVGIVIFLLTMATAFLGYVL), and 176-196 (FFSLHFLFPFILAILVVVHLI). Positions 81 and 95 each coordinate heme b. His180 and His194 together coordinate heme b. His199 contacts a ubiquinone. The next 4 membrane-spanning stretches (helical) occupy residues 224 to 244 (SKDWYGIVVTLMLLSIVVYLM), 286 to 306 (FGGVVSMFLSILILFFFPLLH), 318 to 338 (FGRMAFWSFVVNFVLLTWIGS), and 345 to 366 (FIIIGQLVALYYFFYFLILIPL).

It belongs to the cytochrome b family. The main subunits of complex b-c1 are: cytochrome b, cytochrome c1 and the Rieske protein. Requires heme b as cofactor.

It is found in the mitochondrion inner membrane. Component of the ubiquinol-cytochrome c reductase complex (complex III or cytochrome b-c1 complex) that is part of the mitochondrial respiratory chain. The b-c1 complex mediates electron transfer from ubiquinol to cytochrome c. Contributes to the generation of a proton gradient across the mitochondrial membrane that is then used for ATP synthesis. This Acropora tenuis (Purple tipped acropora) protein is Cytochrome b (MT-CYB).